A 369-amino-acid polypeptide reads, in one-letter code: Coiled-coil domain-containing protein 149 (369 aa).

A coiled-coil region spans residues 1–249; that stretch reads MKENNNAEIL…AKYKQMAEAV (249 aa).

The protein belongs to the CCDC149 family. In terms of tissue distribution, expressed in amphid and phasmid ciliated neurons, and also pharyngeal, touch receptor and motor neurons.

It localises to the cell projection. The protein resides in the cilium. The protein is Coiled-coil domain-containing protein 149 of Caenorhabditis elegans.